We begin with the raw amino-acid sequence, 335 residues long: tRNA-splicing endonuclease (335 aa).

Active-site residues include tyrosine 269, histidine 280, and lysine 311.

Belongs to the tRNA-intron endonuclease family. Archaeal long subfamily. In terms of assembly, homodimer.

It catalyses the reaction pretRNA = a 3'-half-tRNA molecule with a 5'-OH end + a 5'-half-tRNA molecule with a 2',3'-cyclic phosphate end + an intron with a 2',3'-cyclic phosphate and a 5'-hydroxyl terminus.. Endonuclease that removes tRNA introns. Cleaves pre-tRNA at the 5'- and 3'-splice sites to release the intron. The products are an intron and two tRNA half-molecules bearing 2',3' cyclic phosphate and 5'-OH termini. Recognizes a pseudosymmetric substrate in which 2 bulged loops of 3 bases are separated by a stem of 4 bp. This is tRNA-splicing endonuclease from Haloarcula marismortui (strain ATCC 43049 / DSM 3752 / JCM 8966 / VKM B-1809) (Halobacterium marismortui).